An 869-amino-acid chain; its full sequence is MTESEIPKEYNASEVEEKWMDKWDLSMYHFNWGEDPRPQYIIDTPPPYPTGNFHIGNALNWCYIDFVARYKRMRGYNVMFPQGWDCHGLPTEVKVEEIHGITKNQVPRAEFRKMCRELTAGNIDKMRKTMLRLGFSVDWSNEFITMDPSYFVKTQKSFVRMYNKDYIYHEEHPVNWCPRCETAIAFAEVEYETRQTKLNFVHFDKVDIATTRPELMAACVAVAVNPEDKRYSQYVGQEITVPLFGQKVTLIADEDVEPEFGTGAVMICTFGDKQDVRWWVKYELPLIKAIDKQGKMTKAAGKYEGLSIAECREAVVADLKAAGFLYDQKPLEQNVGLCWRCDTPIEILSEPQWFVKIDNDAILKAADEIKWYPEYMKVRLQNWTGTMEWDWCISRQRIFATPIPIWHCKKCGEVMVAEESWLPIDPNEAAPKKACACGSTEFEPETDVLDTWMDSSITALHVTGWESEHDLRLPAQIRPQGHDIIRTWAFYTILRSLALEGKRPWDSIVINGMVLGPDGHKMSKSLGNVISPEEVTTKYSADAFRQWGAVGGSTGSDVMFRWKDVVSASRFLQKMWSIYRFSMSHLKGFGQEDAEKFQKDSLHIIDRWLLSKLNRLVDTATKELDDYQFDSTFKAIRGFAWEVLADNYLELVKGRLYGDDPEGKRAAQYVLYRTTKTLSLLLAPFIPFFAEELYSRLSDESVHTQAWPAVDESLINEEAEAAGELIKEITGEVRRYKSELGMALNAPLKKLEIYNADIDTGDIAGAANSKVELMEGAPSFEYVPVEVKPNMGILGPRFRKDAGAVVKALKAESPAAIEAQAASGKITVNVDGKPIELEPEAVEIRKEVISGGREVDVLEVRGAVVVIVR.

Residues 47–57 (PYPTGNFHIGN) carry the 'HIGH' region motif. Residues 521–525 (KMSKS) carry the 'KMSKS' region motif. An ATP-binding site is contributed by Lys524.

This sequence belongs to the class-I aminoacyl-tRNA synthetase family. ValS type 2 subfamily.

It is found in the cytoplasm. It carries out the reaction tRNA(Val) + L-valine + ATP = L-valyl-tRNA(Val) + AMP + diphosphate. Catalyzes the attachment of valine to tRNA(Val). As ValRS can inadvertently accommodate and process structurally similar amino acids such as threonine, to avoid such errors, it has a 'posttransfer' editing activity that hydrolyzes mischarged Thr-tRNA(Val) in a tRNA-dependent manner. The sequence is that of Valine--tRNA ligase from Methanosarcina barkeri (strain Fusaro / DSM 804).